A 467-amino-acid chain; its full sequence is Glutamate--tRNA ligase (467 aa).

Positions 13-23 (PSPTGYLHVGG) match the 'HIGH' region motif. The short motif at 245-249 (KLSKR) is the 'KMSKS' region element. Lys248 is an ATP binding site.

It belongs to the class-I aminoacyl-tRNA synthetase family. Glutamate--tRNA ligase type 1 subfamily. Monomer.

Its subcellular location is the cytoplasm. The catalysed reaction is tRNA(Glu) + L-glutamate + ATP = L-glutamyl-tRNA(Glu) + AMP + diphosphate. Functionally, catalyzes the attachment of glutamate to tRNA(Glu) in a two-step reaction: glutamate is first activated by ATP to form Glu-AMP and then transferred to the acceptor end of tRNA(Glu). In Herminiimonas arsenicoxydans, this protein is Glutamate--tRNA ligase.